The primary structure comprises 126 residues: MARIAGVDLPRNKRIEIALTYIYGIGLSRSKEILEKTNIDADIKCQDLNDQQVVSIREILESNYQIEGDLKRFESMSIKRLMEISTYRGRRHRLGLPLRGQRTRTNARTRRGGKKTVAGKKKAPRK.

Residues P97–K126 form a disordered region. Over residues Q101–K126 the composition is skewed to basic residues.

The protein belongs to the universal ribosomal protein uS13 family. Part of the 30S ribosomal subunit.

It localises to the plastid. The protein localises to the chloroplast. Its function is as follows. Located at the top of the head of the 30S subunit, it contacts several helices of the 16S rRNA. The protein is Small ribosomal subunit protein uS13c of Pyropia yezoensis (Susabi-nori).